A 56-amino-acid chain; its full sequence is UPF0434 protein CbuG_1535 (56 aa).

It belongs to the UPF0434 family.

The polypeptide is UPF0434 protein CbuG_1535 (Coxiella burnetii (strain CbuG_Q212) (Coxiella burnetii (strain Q212))).